The sequence spans 180 residues: Large ribosomal subunit protein uL6 (180 aa).

Belongs to the universal ribosomal protein uL6 family. As to quaternary structure, part of the 50S ribosomal subunit.

This protein binds to the 23S rRNA, and is important in its secondary structure. It is located near the subunit interface in the base of the L7/L12 stalk, and near the tRNA binding site of the peptidyltransferase center. This Clostridium botulinum (strain 657 / Type Ba4) protein is Large ribosomal subunit protein uL6.